The following is a 231-amino-acid chain: Killer cell lectin-like receptor subfamily F member 1 (231 aa).

At 1–38 the chain is on the cytoplasmic side; the sequence is MQDEERYMTLNVQSKKRSSAQTSQLTFKDYSVTLHWYK. A Phosphotyrosine modification is found at Y7. Residues 39–59 form a helical; Signal-anchor for type II membrane protein membrane-spanning segment; sequence ILLGISGTVNGILTLTLISLI. Residues 60–231 are Extracellular-facing; it reads LLVSQGVLLK…SSVFKWICQY (172 aa). Residues N77, N91, N96, and N176 are each glycosylated (N-linked (GlcNAc...) asparagine). The 110-residue stretch at 121–230 folds into the C-type lectin domain; it reads YQGKCYWFSN…CSSVFKWICQ (110 aa). 2 disulfide bridges follow: C142-C229 and C208-C221.

As to quaternary structure, homodimer. Interacts with CLEC2B. Post-translationally, phosphorylated on Tyr-7; this phosphorylation is required for NKp80/KLRF1-mediated cytotoxicity. In terms of tissue distribution, strongly expressed in peripheral blood leukocytes and spleen, with weaker expression in lymph node and adult liver, and no expression detected in bone marrow, thymus, and fetal liver. Not expressed in brain, heart, placenta, lung, kidney, skeletal muscle, and pancreas. Within peripheral blood leukocyte and immunocyte cell lines, expression was predominant in NK cells but was also detected in monocytes.

It is found in the membrane. In terms of biological role, functions as an activating receptor involved in immunosurveillance upon binding to various ligands displayed at the surface of myeloid cells. Upon interaction with CLEC2B ligand, stimulates NK-cell cytotoxicity and cytokine production leading to the cytolysis of malignant CLEC2B-expressing myeloid cells. Actviation of the common cytotoxicity pathway involves SRC and SYK kinases. This chain is Killer cell lectin-like receptor subfamily F member 1 (KLRF1), found in Homo sapiens (Human).